The sequence spans 119 residues: DNA-binding protein TubR (119 aa).

In terms of assembly, homodimer. Binds to TubZ filaments via the C-terminus of TubZ. DNA is not required for binding to TubZ.

Its function is as follows. A DNA-binding protein that is part of the type III plasmid partition system used to ensure correct segregation of the pBc10987 plasmid. Binds TubZ filaments but does not influence the GTPase activity of TubZ with or without DNA. Cooperatively binds to multiple regions in tubC (centromere-like site) upstream of its own gene with consensus sequence N(T/A)ATTNC(C/G)GNAAT(A/T)N; probably forms an extended DNA-protein filament. Binds sites in its own promoter region and presumably represses its expression; its effect on RNA expression has not been shown. Does not specifically bind to the putative origin of replication on pBc10987. The polypeptide is DNA-binding protein TubR (Bacillus cereus (strain ATCC 10987 / NRS 248)).